We begin with the raw amino-acid sequence, 351 residues long: S-adenosylmethionine:tRNA ribosyltransferase-isomerase (351 aa).

It belongs to the QueA family. Monomer.

Its subcellular location is the cytoplasm. It catalyses the reaction 7-aminomethyl-7-carbaguanosine(34) in tRNA + S-adenosyl-L-methionine = epoxyqueuosine(34) in tRNA + adenine + L-methionine + 2 H(+). It functions in the pathway tRNA modification; tRNA-queuosine biosynthesis. In terms of biological role, transfers and isomerizes the ribose moiety from AdoMet to the 7-aminomethyl group of 7-deazaguanine (preQ1-tRNA) to give epoxyqueuosine (oQ-tRNA). The chain is S-adenosylmethionine:tRNA ribosyltransferase-isomerase from Acinetobacter baumannii (strain SDF).